The sequence spans 234 residues: 1-(5-phosphoribosyl)-5-[(5-phosphoribosylamino)methylideneamino] imidazole-4-carboxamide isomerase (234 aa).

The active-site Proton acceptor is the aspartate 9. Residue aspartate 131 is the Proton donor of the active site.

It belongs to the HisA/HisF family.

It localises to the cytoplasm. It catalyses the reaction 1-(5-phospho-beta-D-ribosyl)-5-[(5-phospho-beta-D-ribosylamino)methylideneamino]imidazole-4-carboxamide = 5-[(5-phospho-1-deoxy-D-ribulos-1-ylimino)methylamino]-1-(5-phospho-beta-D-ribosyl)imidazole-4-carboxamide. The protein operates within amino-acid biosynthesis; L-histidine biosynthesis; L-histidine from 5-phospho-alpha-D-ribose 1-diphosphate: step 4/9. This Staphylococcus aureus (strain bovine RF122 / ET3-1) protein is 1-(5-phosphoribosyl)-5-[(5-phosphoribosylamino)methylideneamino] imidazole-4-carboxamide isomerase.